Consider the following 157-residue polypeptide: 3-hydroxyacyl-[acyl-carrier-protein] dehydratase FabZ (157 aa).

His-58 is an active-site residue.

The protein belongs to the thioester dehydratase family. FabZ subfamily.

The protein resides in the cytoplasm. It catalyses the reaction a (3R)-hydroxyacyl-[ACP] = a (2E)-enoyl-[ACP] + H2O. Involved in unsaturated fatty acids biosynthesis. Catalyzes the dehydration of short chain beta-hydroxyacyl-ACPs and long chain saturated and unsaturated beta-hydroxyacyl-ACPs. The polypeptide is 3-hydroxyacyl-[acyl-carrier-protein] dehydratase FabZ (Rhizobium rhizogenes (strain K84 / ATCC BAA-868) (Agrobacterium radiobacter)).